The following is a 240-amino-acid chain: UDP-2,3-diacylglucosamine hydrolase (240 aa).

Aspartate 8, histidine 10, aspartate 41, asparagine 79, and histidine 114 together coordinate Mn(2+). Substrate is bound at residue 79–80 (NR). Substrate is bound by residues aspartate 122, serine 160, asparagine 164, lysine 167, and histidine 195. Mn(2+) is bound by residues histidine 195 and histidine 197.

This sequence belongs to the LpxH family. Requires Mn(2+) as cofactor.

The protein localises to the cell inner membrane. It catalyses the reaction UDP-2-N,3-O-bis[(3R)-3-hydroxytetradecanoyl]-alpha-D-glucosamine + H2O = 2-N,3-O-bis[(3R)-3-hydroxytetradecanoyl]-alpha-D-glucosaminyl 1-phosphate + UMP + 2 H(+). It functions in the pathway glycolipid biosynthesis; lipid IV(A) biosynthesis; lipid IV(A) from (3R)-3-hydroxytetradecanoyl-[acyl-carrier-protein] and UDP-N-acetyl-alpha-D-glucosamine: step 4/6. Functionally, hydrolyzes the pyrophosphate bond of UDP-2,3-diacylglucosamine to yield 2,3-diacylglucosamine 1-phosphate (lipid X) and UMP by catalyzing the attack of water at the alpha-P atom. Involved in the biosynthesis of lipid A, a phosphorylated glycolipid that anchors the lipopolysaccharide to the outer membrane of the cell. The polypeptide is UDP-2,3-diacylglucosamine hydrolase (Escherichia coli O17:K52:H18 (strain UMN026 / ExPEC)).